We begin with the raw amino-acid sequence, 93 residues long: Acylphosphatase (93 aa).

The 88-residue stretch at arginine 6–tyrosine 93 folds into the Acylphosphatase-like domain. Catalysis depends on residues arginine 21 and asparagine 39.

The protein belongs to the acylphosphatase family.

It catalyses the reaction an acyl phosphate + H2O = a carboxylate + phosphate + H(+). This is Acylphosphatase (acyP) from Geobacter metallireducens (strain ATCC 53774 / DSM 7210 / GS-15).